The primary structure comprises 113 residues: Small ribosomal subunit protein bS6 (113 aa).

It belongs to the bacterial ribosomal protein bS6 family.

Functionally, binds together with bS18 to 16S ribosomal RNA. This chain is Small ribosomal subunit protein bS6, found in Flavobacterium psychrophilum (strain ATCC 49511 / DSM 21280 / CIP 103535 / JIP02/86).